The following is a 152-amino-acid chain: Large ribosomal subunit protein bL9 (152 aa).

It belongs to the bacterial ribosomal protein bL9 family.

Its function is as follows. Binds to the 23S rRNA. This chain is Large ribosomal subunit protein bL9, found in Microcystis aeruginosa (strain NIES-843 / IAM M-2473).